Reading from the N-terminus, the 535-residue chain is Cytochrome P450 monooxygenase claP (535 aa).

A run of 2 helical transmembrane segments spans residues 7–27 and 225–245; these read IGTL…KLVG and YFSM…KLPT. Heme is bound at residue C472.

It belongs to the cytochrome P450 family. It depends on heme as a cofactor.

It localises to the membrane. It participates in secondary metabolite biosynthesis; terpenoid biosynthesis. Its function is as follows. Cytochrome P450 monooxygenase; part of the gene cluster that mediates the biosynthesis of clavilactone A, a meroterpenoid that features a unique benzo-fused ten-membered carbocyclic ring unit with an alpha,beta-epoxy-gamma-lactone moiety, forming an intriguing 10/5/3 tricyclic nested skeleton. Cytochrome P450 monooxygenases claO, claP, claQ, claU, and claW are close orthologs, suggesting that a redundant function or pseudogenes are present in the cla cluster. These monoxygenases are not involved in clavilactone A biosynthesis nor its modification. ClaR, ClaS and ClaT are sufficient to produce clavilactone A. The biosynthesis begins with the prenyltransferase claS that transfers geranyl pyrophosphate (GPP) to hydroquinone to produces geranylhydroquinone. The cytochrome P450 monooxygenase claR then catalyzes the diradical coupling reaction between the intramolecular hydroquinone and allyl moieties to form the benzo-fused ten-membered carbocyclic ring unit of wigantol. Finally the cytochrome P450 monooxygenase claT exquisitely and stereoselectively assembles the alpha,beta-epoxy-gamma-lactone moiety, producing clavilactone A via arnebinol A. The chain is Cytochrome P450 monooxygenase claP from Ampulloclitocybe clavipes (Club foot).